A 208-amino-acid chain; its full sequence is FMN-dependent NADH:quinone oxidoreductase 4 (208 aa).

The protein belongs to the azoreductase type 1 family. In terms of assembly, homodimer. FMN serves as cofactor.

The enzyme catalyses 2 a quinone + NADH + H(+) = 2 a 1,4-benzosemiquinone + NAD(+). It catalyses the reaction N,N-dimethyl-1,4-phenylenediamine + anthranilate + 2 NAD(+) = 2-(4-dimethylaminophenyl)diazenylbenzoate + 2 NADH + 2 H(+). In terms of biological role, quinone reductase that provides resistance to thiol-specific stress caused by electrophilic quinones. Also exhibits azoreductase activity. Catalyzes the reductive cleavage of the azo bond in aromatic azo compounds to the corresponding amines. In Bacillus cereus (strain ATCC 10987 / NRS 248), this protein is FMN-dependent NADH:quinone oxidoreductase 4.